The sequence spans 346 residues: N-acetyl-gamma-glutamyl-phosphate reductase (346 aa).

The active site involves Cys-150.

This sequence belongs to the NAGSA dehydrogenase family. Type 1 subfamily.

Its subcellular location is the cytoplasm. The catalysed reaction is N-acetyl-L-glutamate 5-semialdehyde + phosphate + NADP(+) = N-acetyl-L-glutamyl 5-phosphate + NADPH + H(+). It functions in the pathway amino-acid biosynthesis; L-arginine biosynthesis; N(2)-acetyl-L-ornithine from L-glutamate: step 3/4. In terms of biological role, catalyzes the NADPH-dependent reduction of N-acetyl-5-glutamyl phosphate to yield N-acetyl-L-glutamate 5-semialdehyde. This chain is N-acetyl-gamma-glutamyl-phosphate reductase, found in Desulforudis audaxviator (strain MP104C).